The sequence spans 319 residues: Protein sprouty homolog 1 (319 aa).

Methionine 1 is subject to N-acetylmethionine. Residues 54 to 160 (TEGPSVVKRP…ERAIRTQPKQ (107 aa)) form a disordered region. Over residues 69–79 (PRQEKHERTHE) the composition is skewed to basic and acidic residues. Over residues 112–131 (SRSTSTGSAASSGSNSSASS) the composition is skewed to low complexity. An SPR domain is found at 183–295 (QCGKCKCGEC…CYDWIHRPGC (113 aa)).

The protein belongs to the sprouty family. As to quaternary structure, forms heterodimers with SPRY2. Interacts with TESK1. Interacts with CAV1 (via C-terminus).

Its subcellular location is the cytoplasm. It is found in the membrane. Its function is as follows. Inhibits fibroblast growth factor (FGF)-induced retinal lens fiber differentiation, probably by inhibiting FGF-mediated phosphorylation of ERK1/2. Inhibits TGFB-induced epithelial-to-mesenchymal transition in lens epithelial cells. In Cervus elaphus (Red deer), this protein is Protein sprouty homolog 1 (SPRY1).